Reading from the N-terminus, the 317-residue chain is Periplasmic [NiFe] hydrogenase small subunit 1 (317 aa).

Positions 1 to 49 (MRFSVGLGKEGAEERLARRGVSRRDFLKFCTAIAVTMGMGPAFAPEVAR) form a signal peptide, tat-type signal. [4Fe-4S] cluster contacts are provided by Cys-67, Cys-70, Cys-164, Cys-200, His-238, Cys-241, Cys-266, and Cys-272. Residues Cys-281, Cys-299, and Cys-302 each contribute to the [3Fe-4S] cluster site.

The protein belongs to the [NiFe]/[NiFeSe] hydrogenase small subunit family. As to quaternary structure, heterodimer of a large and a small subunit. [3Fe-4S] cluster serves as cofactor. Requires [4Fe-4S] cluster as cofactor. Post-translationally, predicted to be exported by the Tat system. The position of the signal peptide cleavage has not been experimentally proven.

Its subcellular location is the periplasm. The enzyme catalyses 2 Fe(III)-[cytochrome c3] + H2 = 2 Fe(II)-[cytochrome c3] + 2 H(+). The protein is Periplasmic [NiFe] hydrogenase small subunit 1 (hynB1) of Nitratidesulfovibrio vulgaris (strain ATCC 29579 / DSM 644 / CCUG 34227 / NCIMB 8303 / VKM B-1760 / Hildenborough) (Desulfovibrio vulgaris).